A 256-amino-acid polypeptide reads, in one-letter code: DNA repair protein RecO (256 aa).

This sequence belongs to the RecO family.

In terms of biological role, involved in DNA repair and RecF pathway recombination. In Bacillus pumilus (strain SAFR-032), this protein is DNA repair protein RecO.